Here is a 123-residue protein sequence, read N- to C-terminus: Ribosome-binding factor A (123 aa).

It belongs to the RbfA family. As to quaternary structure, monomer. Binds 30S ribosomal subunits, but not 50S ribosomal subunits or 70S ribosomes.

The protein resides in the cytoplasm. Its function is as follows. One of several proteins that assist in the late maturation steps of the functional core of the 30S ribosomal subunit. Associates with free 30S ribosomal subunits (but not with 30S subunits that are part of 70S ribosomes or polysomes). Required for efficient processing of 16S rRNA. May interact with the 5'-terminal helix region of 16S rRNA. The sequence is that of Ribosome-binding factor A from Delftia acidovorans (strain DSM 14801 / SPH-1).